Reading from the N-terminus, the 146-residue chain is Cyanate hydratase (146 aa).

Catalysis depends on residues Arg87, Glu90, and Ser113.

It belongs to the cyanase family.

It carries out the reaction cyanate + hydrogencarbonate + 3 H(+) = NH4(+) + 2 CO2. In terms of biological role, catalyzes the reaction of cyanate with bicarbonate to produce ammonia and carbon dioxide. The chain is Cyanate hydratase from Marinomonas sp. (strain MWYL1).